A 606-amino-acid polypeptide reads, in one-letter code: Methionine--tRNA ligase (606 aa).

The 'HIGH' region motif lies at 14–24 (PYANGPRHIGH). The Zn(2+) site is built by cysteine 146, cysteine 149, cysteine 159, and cysteine 162. The 'KMSKS' region signature appears at 351 to 355 (KFSSS). Position 354 (serine 354) interacts with ATP.

The protein belongs to the class-I aminoacyl-tRNA synthetase family. MetG type 1 subfamily. In terms of assembly, monomer. It depends on Zn(2+) as a cofactor.

The protein localises to the cytoplasm. The enzyme catalyses tRNA(Met) + L-methionine + ATP = L-methionyl-tRNA(Met) + AMP + diphosphate. Is required not only for elongation of protein synthesis but also for the initiation of all mRNA translation through initiator tRNA(fMet) aminoacylation. In Thermobifida fusca (strain YX), this protein is Methionine--tRNA ligase.